The primary structure comprises 242 residues: Myb-related protein MYBAS2 (242 aa).

2 HTH myb-type domains span residues 5-61 (REEI…HPGL) and 62-112 (KRGR…RKKA). Positions 33 to 57 (WDFIAKVSGLNRTGKSCRLRWVNYL) form a DNA-binding region, H-T-H motif. A Bipartite nuclear localization signal 1 motif is present at residues 62–65 (KRGR). Residues 85–108 (WSRIARRLPGRTDNEIKNYWRTHM) constitute a DNA-binding region (H-T-H motif). The Bipartite nuclear localization signal 2 signature appears at 109-117 (RKKAQERKS). Residues 110 to 133 (KKAQERKSNMSPSSSSSSLTYQSC) form a disordered region. Residues 118–133 (NMSPSSSSSSLTYQSC) show a composition bias toward low complexity.

It localises to the nucleus. In terms of biological role, transcription factor. This chain is Myb-related protein MYBAS2 (MYBAS2), found in Oryza sativa subsp. japonica (Rice).